A 274-amino-acid polypeptide reads, in one-letter code: 2-dehydro-3-deoxyphosphooctonate aldolase (274 aa).

It belongs to the KdsA family.

Its subcellular location is the cytoplasm. It carries out the reaction D-arabinose 5-phosphate + phosphoenolpyruvate + H2O = 3-deoxy-alpha-D-manno-2-octulosonate-8-phosphate + phosphate. It functions in the pathway carbohydrate biosynthesis; 3-deoxy-D-manno-octulosonate biosynthesis; 3-deoxy-D-manno-octulosonate from D-ribulose 5-phosphate: step 2/3. Its pathway is bacterial outer membrane biogenesis; lipopolysaccharide biosynthesis. The sequence is that of 2-dehydro-3-deoxyphosphooctonate aldolase from Legionella pneumophila (strain Corby).